A 391-amino-acid chain; its full sequence is Phosphoglycerate kinase (391 aa).

Residues 21–23 (DFN), Arg41, 64–67 (HLGR), Arg121, and Arg154 contribute to the substrate site. ATP contacts are provided by residues Lys205, Glu322, and 348–351 (GGDS).

The protein belongs to the phosphoglycerate kinase family. As to quaternary structure, monomer.

It localises to the cytoplasm. It carries out the reaction (2R)-3-phosphoglycerate + ATP = (2R)-3-phospho-glyceroyl phosphate + ADP. It participates in carbohydrate degradation; glycolysis; pyruvate from D-glyceraldehyde 3-phosphate: step 2/5. In Solibacter usitatus (strain Ellin6076), this protein is Phosphoglycerate kinase.